Here is a 230-residue protein sequence, read N- to C-terminus: Glutathione S-transferase 2 (230 aa).

Positions Ala2–Arg86 constitute a GST N-terminal domain. The 138-residue stretch at Asp93–His230 folds into the GST C-terminal domain.

It belongs to the GST superfamily.

It catalyses the reaction RX + glutathione = an S-substituted glutathione + a halide anion + H(+). Its function is as follows. Involved in the oxidative stress response and detoxification. The chain is Glutathione S-transferase 2 (gst2) from Schizosaccharomyces pombe (strain 972 / ATCC 24843) (Fission yeast).